The primary structure comprises 247 residues: Coiled-coil domain-containing protein 124 homolog (247 aa).

Positions 1–146 (MGGKKFGTNS…TTTTGSDDHE (146 aa)) are disordered. A coiled-coil region spans residues 8–85 (TNSKAEEARS…QEDKEIKERY (78 aa)). A compositionally biased stretch (basic and acidic residues) spans 11-114 (KAEEARSKKA…EQKQREKELA (104 aa)). A compositionally biased stretch (low complexity) spans 122–140 (VVVVPTTTTTTTTTTTTTT).

The protein belongs to the CCDC124 family. As to quaternary structure, associates with translationally inactive ribosomes in the nonrotated state.

Ribosome-binding protein involved in ribosome hibernation: associates with translationally inactive ribosomes and stabilizes the nonrotated conformation of the 80S ribosome, thereby promoting ribosome preservation and storage. In Dictyostelium discoideum (Social amoeba), this protein is Coiled-coil domain-containing protein 124 homolog.